Reading from the N-terminus, the 210-residue chain is ATP-dependent Clp protease proteolytic subunit (210 aa).

The active-site Nucleophile is Ser-107. The active site involves His-132.

It belongs to the peptidase S14 family. Fourteen ClpP subunits assemble into 2 heptameric rings which stack back to back to give a disk-like structure with a central cavity, resembling the structure of eukaryotic proteasomes.

The protein resides in the cytoplasm. It catalyses the reaction Hydrolysis of proteins to small peptides in the presence of ATP and magnesium. alpha-casein is the usual test substrate. In the absence of ATP, only oligopeptides shorter than five residues are hydrolyzed (such as succinyl-Leu-Tyr-|-NHMec, and Leu-Tyr-Leu-|-Tyr-Trp, in which cleavage of the -Tyr-|-Leu- and -Tyr-|-Trp bonds also occurs).. In terms of biological role, cleaves peptides in various proteins in a process that requires ATP hydrolysis. Has a chymotrypsin-like activity. Plays a major role in the degradation of misfolded proteins. This is ATP-dependent Clp protease proteolytic subunit from Cereibacter sphaeroides (strain ATCC 17025 / ATH 2.4.3) (Rhodobacter sphaeroides).